The following is a 364-amino-acid chain: Nucleosome assembly protein 1;2 (364 aa).

A coiled-coil region spans residues V32–E86. Residues L53–Q68 carry the Nuclear export signal motif. The Nuclear localization signal motif lies at K227–K232. 2 disordered regions span residues F250 to T269 and G301 to Q364. Acidic residues-rich tracts occupy residues P259–T269 and A304–D340. C361 is modified (cysteine methyl ester). C361 carries the S-farnesyl cysteine lipid modification. A propeptide spans K362–Q364 (removed in mature form).

This sequence belongs to the nucleosome assembly protein (NAP) family. As to quaternary structure, binds preferentially histone H1 in vitro. In terms of tissue distribution, highly expressed in tissues exhibiting active cell-division activities, such as root and shoot meristems and young flowers.

Its subcellular location is the nucleus. The protein localises to the cytoplasm. In terms of biological role, may modulate chromatin structure by regulation of nucleosome assembly/disassembly. The chain is Nucleosome assembly protein 1;2 (NAP1;2) from Oryza sativa subsp. indica (Rice).